The sequence spans 231 residues: Putative N-acetylmannosamine-6-phosphate 2-epimerase (231 aa).

This sequence belongs to the NanE family.

The catalysed reaction is an N-acyl-D-glucosamine 6-phosphate = an N-acyl-D-mannosamine 6-phosphate. Its pathway is amino-sugar metabolism; N-acetylneuraminate degradation; D-fructose 6-phosphate from N-acetylneuraminate: step 3/5. In terms of biological role, converts N-acetylmannosamine-6-phosphate (ManNAc-6-P) to N-acetylglucosamine-6-phosphate (GlcNAc-6-P). This chain is Putative N-acetylmannosamine-6-phosphate 2-epimerase, found in Glaesserella parasuis serovar 5 (strain SH0165) (Haemophilus parasuis).